A 912-amino-acid chain; its full sequence is Coatomer subunit beta (912 aa).

HEAT repeat units follow at residues 59–96, 100–135, 136–172, 244–281, 300–337, 339–375, 397–434, 441–479, 550–575, and 576–612; these read PIPQ…THLG, SEMI…REAE, VLEP…HFDY, SERS…APTA, NVKM…PNID, CKKV…KEFD, EVLG…TYPS, KKLI…AMTS, LKAQ…TSKS, and AYER…YLKY.

In terms of assembly, oligomeric complex that consists of at least the alpha, beta, beta', gamma, delta, epsilon and zeta subunits.

The protein resides in the cytoplasm. It localises to the golgi apparatus membrane. The protein localises to the cytoplasmic vesicle. Its subcellular location is the COPI-coated vesicle membrane. The coatomer is a cytosolic protein complex that binds to dilysine motifs and reversibly associates with Golgi non-clathrin-coated vesicles, which further mediate biosynthetic protein transport from the ER, via the Golgi up to the trans Golgi network. Coatomer complex is required for budding from Golgi membranes, and is essential for the retrograde Golgi-to-ER transport of dilysine-tagged proteins. The protein is Coatomer subunit beta (copb) of Dictyostelium discoideum (Social amoeba).